A 297-amino-acid polypeptide reads, in one-letter code: Farnesyl diphosphate synthase (297 aa).

Isopentenyl diphosphate contacts are provided by lysine 47, arginine 50, and histidine 79. Mg(2+)-binding residues include aspartate 86 and aspartate 92. Arginine 97 serves as a coordination point for (2E)-geranyl diphosphate. Isopentenyl diphosphate is bound at residue arginine 98. 4 residues coordinate (2E)-geranyl diphosphate: lysine 183, threonine 184, glutamine 221, and lysine 238.

The protein belongs to the FPP/GGPP synthase family. Mg(2+) is required as a cofactor.

The protein localises to the cytoplasm. The enzyme catalyses isopentenyl diphosphate + (2E)-geranyl diphosphate = (2E,6E)-farnesyl diphosphate + diphosphate. This chain is Farnesyl diphosphate synthase, found in Geobacillus stearothermophilus (Bacillus stearothermophilus).